Consider the following 574-residue polypeptide: Phospholipase B-like protein A (574 aa).

The N-terminal stretch at 1-20 (MRVIRSLLLLTIAIIGSVLS) is a signal peptide. N159, N195, and N415 each carry an N-linked (GlcNAc...) asparagine glycan.

Belongs to the phospholipase B-like family.

The protein resides in the secreted. Functionally, phospholipase that removes both fatty-acid chains from phosphatidylcholine and produces the water-soluble glycerophosphorylcholine. In addition to phosphatidylcholine deacylation, it also hydrolyzes phosphatidylinositol and phosphatidylethanolamine. The polypeptide is Phospholipase B-like protein A (plbA) (Dictyostelium discoideum (Social amoeba)).